Reading from the N-terminus, the 359-residue chain is B-cell differentiation antigen CD72 (359 aa).

The Cytoplasmic segment spans residues 1–95; sequence MAEAITYADL…LPCRTTCLRY (95 aa). Residues Tyr-7 and Tyr-39 each carry the phosphotyrosine; by LYN modification. A helical; Signal-anchor for type II membrane protein transmembrane segment spans residues 96–116; the sequence is LLLGLLLTCLLLGVTAICLGV. Residues 117 to 359 are Extracellular-facing; sequence RYLQVSQQLQ…CEMTAFRFPD (243 aa). Asn-136 carries N-linked (GlcNAc...) asparagine glycosylation. The C-type lectin domain occupies 232 to 352; sequence CCPSGWIMHQ…RSSLPYICEM (121 aa). Intrachain disulfides connect Cys-233/Cys-244, Cys-261/Cys-350, and Cys-325/Cys-342.

As to quaternary structure, homodimer; disulfide-linked. Associates with CD5. Interacts (tyrosine phosphorylated) with PTPN6/SHP-1. Post-translationally, phosphorylated upon engagement of the B-cell receptor, probably by LYN or SYK. Phosphorylation at Tyr-7 is important for interaction with PTPN6/SHP-1. In terms of tissue distribution, pre-B-cells and B-cells but not terminally differentiated plasma cells.

It localises to the membrane. In terms of biological role, co-receptor of B cell receptor (BCR) that plays both positive and negative roles on B-cell functions. Recognizes the Sm/ribonucleoprotein (RNP) self-antigen ligand, and coligation of CD72 and BCR inhibits BCR signaling. Mechanistically, ligand binding leads to the recruitment of PTPN6/SHP-1 to the BCR complex which is inhibitory to BCR signaling. Also acts as a ligand for CD5 and thereby plays a critical role in maintaining regulatory T and B-cell homeostasis. The protein is B-cell differentiation antigen CD72 (CD72) of Homo sapiens (Human).